Here is a 463-residue protein sequence, read N- to C-terminus: Probable diacyglycerol O-acyltransferase tgs1 (463 aa).

The active-site Proton acceptor is the histidine 137.

Belongs to the long-chain O-acyltransferase family.

It carries out the reaction an acyl-CoA + a 1,2-diacyl-sn-glycerol = a triacyl-sn-glycerol + CoA. The protein operates within glycerolipid metabolism; triacylglycerol biosynthesis. Functionally, catalyzes the terminal and only committed step in triacylglycerol synthesis by using diacylglycerol and fatty acyl CoA as substrates. Required for storage lipid synthesis. The polypeptide is Probable diacyglycerol O-acyltransferase tgs1 (tgs1) (Mycobacterium tuberculosis (strain CDC 1551 / Oshkosh)).